We begin with the raw amino-acid sequence, 556 residues long: Phosphoacetylglucosamine mutase (556 aa).

The active-site Phosphoserine intermediate is the S68. Mg(2+)-binding residues include S68, D286, D288, and D290. Position 68 is a phosphoserine (S68). Substrate contacts are provided by residues 386 to 388 (EAN), 518 to 522 (RPSGT), and R527.

It belongs to the phosphohexose mutase family. It depends on Mg(2+) as a cofactor.

The enzyme catalyses N-acetyl-alpha-D-glucosamine 1-phosphate = N-acetyl-D-glucosamine 6-phosphate. It functions in the pathway nucleotide-sugar biosynthesis; UDP-N-acetyl-alpha-D-glucosamine biosynthesis; N-acetyl-alpha-D-glucosamine 1-phosphate from alpha-D-glucosamine 6-phosphate (route I): step 2/2. In terms of biological role, interconverts GlcNAc-6-P and GlcNAc-1-P. The chain is Phosphoacetylglucosamine mutase (DRT101) from Arabidopsis thaliana (Mouse-ear cress).